The sequence spans 957 residues: MTQTLSQLENRGAFIERHIGPDAVQQQEMLNAVGAESLNALTGQIVPKDIQLATPPQVGEAATEYAALAELKAIAGRNKRFTSYIGMGYTAVQLPPVILRNMLENPGWYTAYTPYQPEVSQGRLEALLNFQQVTLDLTGLDMASASLLDEATAAAEAMAMAKRVSKLKNANRFFVASDVHPQTLDVVRTRAETFGFDVIVDDAAKALDHQDVFGVLLQQVGSTGEIHDYSALISELKARKVVVSVAADFMALVLLTAPGKQGADIVFGSAQRFGVPMGYGGPHAAFFAAKDEFKRSMPGRIIGVSKDAAGNTALRMAMQTREQHIRREKANSNICTSQVLLANIASLYAVYHGPVGLKRIANRIHRLTDILAAGLQQKGLKLRHAHYFDTLCVEVADKAAVLARAEAAEINLRSDIHNAVGITLDETTTRENVAQLFNVLLGDSHGLNIETLDKDVALDSRSIQQSMLRDDAILTHPVFNRYHSETEMMRYMHSLERKDLALNQAMIPLGSCTMKLNAAAEMIPITWPEFAELHPFCPPEQAEGYHQMISQLSDWLVKLTGYDAVCMQPNSGAQGEYAGLLAIRHYHESRNEGHRDICLIPASAHGTNPASAHMAGMQVVVVACDKNGNIDLDDLRAKAEQHAANLSCIMVTYPSTHGVYEETIREVCEVVHQFGGQVYLDGANMNAQVGITSPGFIGADVSHLNLHKTFCIPHGGGGPGMGPIGVKAHLAPFVPGHSVVQIEGMLTRQGAVSAAPFGSASILPISWMYIRMMGAEGLKQASQVAILNANYIASRLKDAYPVLYTGRDGRVAHECILDIRPLKEETGISELDIAKRLIDYGFHAPTMSFPVAGTLMVEPTESEGKAELDRFIDAMLAIRAEIDQVKAGVWPQEDNPLVNAPHIQSELVAEWAHPYSREVAVFPAGVADKYWPTVKRLDDVYGDRNLFCSCVPISDYQ.

Position 708 is an N6-(pyridoxal phosphate)lysine (Lys708).

It belongs to the GcvP family. As to quaternary structure, the glycine cleavage system is composed of four proteins: P, T, L and H. Requires pyridoxal 5'-phosphate as cofactor.

It catalyses the reaction N(6)-[(R)-lipoyl]-L-lysyl-[glycine-cleavage complex H protein] + glycine + H(+) = N(6)-[(R)-S(8)-aminomethyldihydrolipoyl]-L-lysyl-[glycine-cleavage complex H protein] + CO2. Its function is as follows. The glycine cleavage system catalyzes the degradation of glycine. The P protein binds the alpha-amino group of glycine through its pyridoxal phosphate cofactor; CO(2) is released and the remaining methylamine moiety is then transferred to the lipoamide cofactor of the H protein. In Salmonella newport (strain SL254), this protein is Glycine dehydrogenase (decarboxylating).